A 240-amino-acid chain; its full sequence is Probable metal transport system ATP-binding protein TM_0124 (240 aa).

Positions 4-223 (VEVKNLTYRI…LKKIFTDFDI (220 aa)) constitute an ABC transporter domain. 36-43 (GPNGAGKT) contacts ATP.

Belongs to the ABC transporter superfamily.

In terms of biological role, part of an ATP-driven transport system TM_0123/TM_0124/TM_0125 for a metal. Probably responsible for energy coupling to the transport system. The polypeptide is Probable metal transport system ATP-binding protein TM_0124 (Thermotoga maritima (strain ATCC 43589 / DSM 3109 / JCM 10099 / NBRC 100826 / MSB8)).